A 132-amino-acid polypeptide reads, in one-letter code: Glycine cleavage system H protein (132 aa).

One can recognise a Lipoyl-binding domain in the interval 24–106 (TVRVGITDFA…YGAGWLLDVQ (83 aa)). N6-lipoyllysine is present on K65.

The protein belongs to the GcvH family. As to quaternary structure, the glycine cleavage system is composed of four proteins: P, T, L and H. Requires (R)-lipoate as cofactor.

The glycine cleavage system catalyzes the degradation of glycine. The H protein shuttles the methylamine group of glycine from the P protein to the T protein. In Mycobacterium avium (strain 104), this protein is Glycine cleavage system H protein.